A 1072-amino-acid chain; its full sequence is Guanylyl cyclase C (1072 aa).

The signal sequence occupies residues 1–22 (MTSLLGLAVRLLLFQPTLMFWA). The Extracellular portion of the chain corresponds to 23–429 (SQVRQKCHNG…PNDVPGLGPQ (407 aa)). Asn31, Asn74, Asn78, Asn187, Asn194, Asn306, and Asn401 each carry an N-linked (GlcNAc...) asparagine glycan. Residues 430–453 (ILMIAVFTLTGIVVVLLLIALLVL) form a helical membrane-spanning segment. At 454-1072 (RKYRRDHELR…NNSDHDSTYF (619 aa)) the chain is on the cytoplasmic side. The Protein kinase domain occupies 488–748 (LKIDDDRRRD…KIESTLAKIF (261 aa)). In terms of domain architecture, Guanylate cyclase spans 823–953 (TIYFSDIVGF…DTVNTASRME (131 aa)).

It belongs to the adenylyl cyclase class-4/guanylyl cyclase family. As to quaternary structure, homotrimer. Interacts via its C-terminal region with PDZK2. Interacts with the lectin chaperone VIP36. In terms of processing, glycosylation at Asn-74 and/or Asn-78 is required for interaction with VIP36 while glycosylation at Asn-401 modulates ligand-mediated GC-C activation.

The protein resides in the cell membrane. Its subcellular location is the endoplasmic reticulum membrane. The enzyme catalyses GTP = 3',5'-cyclic GMP + diphosphate. Guanylyl cyclase that catalyzes synthesis of cyclic GMP (cGMP) from GTP. Receptor for the E.coli heat-stable enterotoxin; E.coli enterotoxin markedly stimulates the accumulation of cGMP in mammalian cells expressing GUCY2C. The sequence is that of Guanylyl cyclase C (Gucy2c) from Rattus norvegicus (Rat).